A 515-amino-acid polypeptide reads, in one-letter code: ATP-dependent rRNA helicase rrp-3 (515 aa).

The disordered stretch occupies residues 1 to 85 (MSTKRRKTSD…LDVAPEQEEV (85 aa)). The segment covering 15–24 (LKKAAAPSAP) has biased composition (low complexity). The span at 25 to 55 (ELKKEKKVKDKSTKDKSSTKKTEKTEKKQDA) shows a compositional bias: basic and acidic residues. Acidic residues predominate over residues 69 to 85 (TEEDSVTLDVAPEQEEV). A Q motif motif is present at residues 90–118 (KTFKDLGIVDALCEACERLGYKNPTPIQE). Residues 121 to 292 (IPLALQNRDI…RASLRDPLKV (172 aa)) enclose the Helicase ATP-binding domain. 134 to 141 (AETGSGKT) contributes to the ATP binding site. Residues 240-243 (DEAD) carry the DEAD box motif. Residues 316–464 (HKDTYLVYLC…EYPLEKDEVM (149 aa)) form the Helicase C-terminal domain. The disordered stretch occupies residues 482 to 515 (KSLMENQGKHGGLLKRKRGNGQGGGRDHMDAEEG). Residues 506-515 (GRDHMDAEEG) show a composition bias toward basic and acidic residues.

It belongs to the DEAD box helicase family. DDX47/RRP3 subfamily.

Its subcellular location is the nucleus. Its function is as follows. Required for pre-ribosomal RNA processing. Involved in the maturation of the 35S-pre-rRNA and to its cleavage to mature 18S rRNA. This Neurospora crassa (strain ATCC 24698 / 74-OR23-1A / CBS 708.71 / DSM 1257 / FGSC 987) protein is ATP-dependent rRNA helicase rrp-3 (rrp-3).